The following is a 188-amino-acid chain: Protein ORFV073 (188 aa).

In terms of assembly, interacts with host IKBKG; this interaction inhibits host NF-kappa-B pathway activation.

The protein localises to the host nucleus. It localises to the host cytoplasm. The protein resides in the host perinuclear region. Its subcellular location is the virion. In terms of biological role, plays a role in the inhibition of the host NF-kappa-B pathway early during infection. Prevents the host RELA subunit from reaching the nucleus and activate transcription. This is Protein ORFV073 from Capra hircus (Goat).